The following is a 248-amino-acid chain: ATP synthase subunit a, chloroplastic (248 aa).

5 helical membrane-spanning segments follow: residues 37–57 (AQVL…SIVA), 96–116 (VPFI…GALF), 135–155 (INTT…AGLH), 200–220 (LVVA…MMFL), and 221–241 (GLFT…AYIG).

Belongs to the ATPase A chain family. In terms of assembly, F-type ATPases have 2 components, CF(1) - the catalytic core - and CF(0) - the membrane proton channel. CF(1) has five subunits: alpha(3), beta(3), gamma(1), delta(1), epsilon(1). CF(0) has four main subunits: a, b, b' and c.

It localises to the plastid. Its subcellular location is the chloroplast thylakoid membrane. Its function is as follows. Key component of the proton channel; it plays a direct role in the translocation of protons across the membrane. The polypeptide is ATP synthase subunit a, chloroplastic (Angiopteris evecta (Mule's foot fern)).